A 109-amino-acid chain; its full sequence is Putative double-stranded DNA mimic protein KPK_2119 (109 aa).

This sequence belongs to the putative dsDNA mimic protein family.

Functionally, may act as a double-stranded DNA (dsDNA) mimic. Probably regulates the activity of a dsDNA-binding protein. This chain is Putative double-stranded DNA mimic protein KPK_2119, found in Klebsiella pneumoniae (strain 342).